A 389-amino-acid chain; its full sequence is Succinate--CoA ligase [ADP-forming] subunit beta (389 aa).

The 228-residue stretch at 9–236 (KELFAKHGVP…RDATDPLELK (228 aa)) folds into the ATP-grasp domain. ATP is bound by residues lysine 45, 52–54 (GRG), serine 94, and glutamate 99. Mg(2+) contacts are provided by asparagine 191 and aspartate 205. Residues asparagine 256 and 318–320 (GIT) each bind substrate.

Belongs to the succinate/malate CoA ligase beta subunit family. In terms of assembly, heterotetramer of two alpha and two beta subunits. Mg(2+) is required as a cofactor.

It catalyses the reaction succinate + ATP + CoA = succinyl-CoA + ADP + phosphate. The enzyme catalyses GTP + succinate + CoA = succinyl-CoA + GDP + phosphate. It participates in carbohydrate metabolism; tricarboxylic acid cycle; succinate from succinyl-CoA (ligase route): step 1/1. Functionally, succinyl-CoA synthetase functions in the citric acid cycle (TCA), coupling the hydrolysis of succinyl-CoA to the synthesis of either ATP or GTP and thus represents the only step of substrate-level phosphorylation in the TCA. The beta subunit provides nucleotide specificity of the enzyme and binds the substrate succinate, while the binding sites for coenzyme A and phosphate are found in the alpha subunit. The protein is Succinate--CoA ligase [ADP-forming] subunit beta of Rhodococcus erythropolis (strain PR4 / NBRC 100887).